We begin with the raw amino-acid sequence, 983 residues long: Protein translocase subunit SecA (983 aa).

Residues Q83, 101-105 (GEGKT), and D489 contribute to the ATP site. Positions 948–983 (ISSEEEDNNEKTNINNNEDLERTKGEAQQTAKNPNE) are disordered. Polar residues predominate over residues 973-983 (EAQQTAKNPNE).

This sequence belongs to the SecA family. As to quaternary structure, monomer and homodimer. Part of the essential Sec protein translocation apparatus which comprises SecA, SecYEG and auxiliary proteins SecDF. Other proteins may also be involved.

The protein localises to the cell membrane. It localises to the cytoplasm. It carries out the reaction ATP + H2O + cellular proteinSide 1 = ADP + phosphate + cellular proteinSide 2.. In terms of biological role, part of the Sec protein translocase complex. Interacts with the SecYEG preprotein conducting channel. Has a central role in coupling the hydrolysis of ATP to the transfer of proteins into and across the cell membrane, serving as an ATP-driven molecular motor driving the stepwise translocation of polypeptide chains across the membrane. In Mesomycoplasma hyopneumoniae (strain J / ATCC 25934 / NCTC 10110) (Mycoplasma hyopneumoniae), this protein is Protein translocase subunit SecA.